The following is a 1360-amino-acid chain: MSRQSTLYSFFPKSPALSDANKASARASREGGRAAAAPGASPSPGGDAAWSEAGPGPRPLARSASPPKAKNLNGGLRRSVAPAAPTSCDFSPGDLVWAKMEGYPWWPCLVYNHPFDGTFIREKGKSVRVHVQFFDDSPTRGWVSKRLLKPYTGSKSKEAQKGGHFYSAKPEILRAMQRADEALNKDKIKRLELAVCDEPSEPEEEEEMEVGTTYVTDKSEEDNEIESEEEVQPKTQGSRRSSRQIKKRRVISDSESDIGGSDVEFKPDTKEEGSSDEISSGVGDSESEGLNSPVKVARKRKRMVTGNGSLKRKSSRKETPSATKQATSISSETKNTLRAFSAPQNSESQAHVSGGGDDSSRPTVWYHETLEWLKEEKRRDEHRRRPDHPDFDASTLYVPEDFLNSCTPGMRKWWQIKSQNFDLVICYKVGKFYELYHMDALIGVSELGLVFMKGNWAHSGFPEIAFGRYSDSLVQKGYKVARVEQTETPEMMEARCRKMAHISKYDRVVRREICRIITKGTQTYSVLEGDPSENYSKYLLSLKEKEEDSSGHTRAYGVCFVDTSLGKFFIGQFSDDRHCSRFRTLVAHYPPVQVLFEKGNLSKETKTILKSSLSCSLQEGLIPGSQFWDASKTLRTLLEEEYFREKLSDGIGVMLPQVLKGMTSESDSIGLTPGEKSELALSALGGCVFYLKKCLIDQELLSMANFEEYIPLDSDTVSTTRSGAIFTKAYQRMVLDAVTLNNLEIFLNGTNGSTEGTLLERVDTCHTPFGKRLLKQWLCAPLCNHYAINDRLDAIEDLMVVPDKISEVVELLKKLPDLERLLSKIHNVGSPLKSQNHPDSRAIMYEETTYSKKKIIDFLSALEGFKVMCKIIGIMEEVADGFKSKILKQVISLQTKNPEGRFPDLTVELNRWDTAFDHEKARKTGLITPKAGFDSDYDQALADIRENEQSLLEYLEKQRNRIGCRTIVYWGIGRNRYQLEIPENFTTRNLPEEYELKSTKKGCKRYWTKTIEKKLANLINAEERRDVSLKDCMRRLFYNFDKNYKDWQSAVECIAVLDVLLCLANYSRGGDGPMCRPVILLPEDTPPFLELKGSRHPCITKTFFGDDFIPNDILIGCEEEEQENGKAYCVLVTGPNMGGKSTLMRQAGLLAVMAQMGCYVPAEVCRLTPIDRVFTRLGASDRIMSGESTFFVELSETASILMHATAHSLVLVDELGRGTATFDGTAIANAVVKELAETIKCRTLFSTHYHSLVEDYSQNVAVRLGHMACMVENECEDPSQETITFLYKFIKGACPKSYGFNAARLANLPEEVIQKGHRKAREFEKMNQSLRLFREVCLASERSTVDAEAVHKLLTLIKEL.

Positions M1 to A84 are disordered. A phosphoserine mark is found at S14, S41, and S43. The segment covering R33–S51 has biased composition (low complexity). K70 carries the post-translational modification N6-acetyllysine. 6 positions are modified to phosphoserine: S79, S91, S137, S200, S219, and S227. In terms of domain architecture, PWWP spans P92–S154. Positions V195 to P362 are disordered. Composition is skewed to acidic residues over residues E198 to E209 and S219 to E230. Positions R240–R249 are enriched in basic residues. Residues S252, S254, S256, and S261 each carry the phosphoserine modification. Residues V263–G273 are compositionally biased toward basic and acidic residues. T269 carries the post-translational modification Phosphothreonine. S274, S275, S279, S280, and S309 each carry phosphoserine. Residues P320–H351 show a composition bias toward polar residues. T488 is modified (phosphothreonine). K504 carries the N6-acetyllysine modification. 2 positions are modified to phosphoserine: S830 and S935. T1010 carries the phosphothreonine modification. Position 1134–1141 (G1134–S1141) interacts with ATP.

It belongs to the DNA mismatch repair MutS family. Component of the DNA mismatch repair (MMR) complex composed at least of MSH2, MSH3, MSH6, PMS1 and MLH1. Heterodimer consisting of MSH2-MSH6 (MutS alpha). Forms a ternary complex with MutL alpha (MLH1-PMS1). Interacts with MCM9. Part of the BRCA1-associated genome surveillance complex (BASC), which contains BRCA1, MSH2, MSH6, MLH1, ATM, BLM, PMS2 and the RAD50-MRE11-NBS1 protein complex. This association could be a dynamic process changing throughout the cell cycle and within subnuclear domains. In terms of assembly, (Microbial infection) Interacts with herpes simplex virus 1 protein UL12. Post-translationally, the N-terminus is blocked. In terms of processing, phosphorylated by PRKCZ, which may prevent MutS alpha degradation by the ubiquitin-proteasome pathway.

The protein resides in the nucleus. It is found in the chromosome. In terms of biological role, component of the post-replicative DNA mismatch repair system (MMR). Heterodimerizes with MSH2 to form MutS alpha, which binds to DNA mismatches thereby initiating DNA repair. When bound, MutS alpha bends the DNA helix and shields approximately 20 base pairs, and recognizes single base mismatches and dinucleotide insertion-deletion loops (IDL) in the DNA. After mismatch binding, forms a ternary complex with the MutL alpha heterodimer, which is thought to be responsible for directing the downstream MMR events, including strand discrimination, excision, and resynthesis. ATP binding and hydrolysis play a pivotal role in mismatch repair functions. The ATPase activity associated with MutS alpha regulates binding similar to a molecular switch: mismatched DNA provokes ADP--&gt;ATP exchange, resulting in a discernible conformational transition that converts MutS alpha into a sliding clamp capable of hydrolysis-independent diffusion along the DNA backbone. This transition is crucial for mismatch repair. MutS alpha may also play a role in DNA homologous recombination repair. Recruited on chromatin in G1 and early S phase via its PWWP domain that specifically binds trimethylated 'Lys-36' of histone H3 (H3K36me3): early recruitment to chromatin to be replicated allowing a quick identification of mismatch repair to initiate the DNA mismatch repair reaction. This is DNA mismatch repair protein Msh6 from Homo sapiens (Human).